The primary structure comprises 281 residues: Aminoglycoside N(3)-acetyltransferase IX (281 aa).

It belongs to the antibiotic N-acetyltransferase family.

It carries out the reaction a 2-deoxystreptamine antibiotic + acetyl-CoA = an N(3)-acetyl-2-deoxystreptamine antibiotic + CoA + H(+). Functionally, resistance to neomycin. The sequence is that of Aminoglycoside N(3)-acetyltransferase IX (aacC9) from Micromonospora chalcea.